The chain runs to 497 residues: Glycerol kinase (497 aa).

Threonine 12 serves as a coordination point for ADP. Residues threonine 12, threonine 13, and serine 14 each contribute to the ATP site. Threonine 12 provides a ligand contact to sn-glycerol 3-phosphate. Residue arginine 16 participates in ADP binding. The sn-glycerol 3-phosphate site is built by arginine 82, glutamate 83, tyrosine 132, and aspartate 239. Glycerol contacts are provided by arginine 82, glutamate 83, tyrosine 132, aspartate 239, and glutamine 240. The ADP site is built by threonine 261 and glycine 303. 4 residues coordinate ATP: threonine 261, glycine 303, glutamine 307, and glycine 402. Residues glycine 402 and asparagine 406 each coordinate ADP.

This sequence belongs to the FGGY kinase family. In terms of assembly, homodimer.

The enzyme catalyses glycerol + ATP = sn-glycerol 3-phosphate + ADP + H(+). It functions in the pathway polyol metabolism; glycerol degradation via glycerol kinase pathway; sn-glycerol 3-phosphate from glycerol: step 1/1. In terms of biological role, key enzyme in the regulation of glycerol uptake and metabolism. Catalyzes the phosphorylation of glycerol to yield sn-glycerol 3-phosphate. Can utilize other nucleoside triphosphates (GTP, CTP, UTP and ITP) as a phosphoryl donor. This Thermococcus kodakarensis (strain ATCC BAA-918 / JCM 12380 / KOD1) (Pyrococcus kodakaraensis (strain KOD1)) protein is Glycerol kinase.